Consider the following 159-residue polypeptide: Phosphopantetheine adenylyltransferase (159 aa).

Thr-10 serves as a coordination point for substrate. ATP-binding positions include 10–11 (TF) and His-18. The substrate site is built by Lys-42, Met-74, and Arg-88. ATP contacts are provided by residues 89 to 91 (GLR), Glu-99, and 124 to 130 (WSFISSS).

Belongs to the bacterial CoaD family. As to quaternary structure, homohexamer. Requires Mg(2+) as cofactor.

The protein resides in the cytoplasm. The enzyme catalyses (R)-4'-phosphopantetheine + ATP + H(+) = 3'-dephospho-CoA + diphosphate. The protein operates within cofactor biosynthesis; coenzyme A biosynthesis; CoA from (R)-pantothenate: step 4/5. In terms of biological role, reversibly transfers an adenylyl group from ATP to 4'-phosphopantetheine, yielding dephospho-CoA (dPCoA) and pyrophosphate. In Pectobacterium carotovorum subsp. carotovorum (strain PC1), this protein is Phosphopantetheine adenylyltransferase.